We begin with the raw amino-acid sequence, 334 residues long: Probable tRNA pseudouridine synthase B (334 aa).

Catalysis depends on D82, which acts as the Nucleophile. In terms of domain architecture, PUA spans 250 to 325 (LPKVWIRDSA…IAVDVDKVFM (76 aa)).

It belongs to the pseudouridine synthase TruB family. Type 2 subfamily.

It catalyses the reaction uridine(55) in tRNA = pseudouridine(55) in tRNA. In terms of biological role, could be responsible for synthesis of pseudouridine from uracil-55 in the psi GC loop of transfer RNAs. The sequence is that of Probable tRNA pseudouridine synthase B from Thermococcus onnurineus (strain NA1).